Consider the following 31-residue polypeptide: Large ribosomal subunit protein bL21 (31 aa).

This sequence belongs to the bacterial ribosomal protein bL21 family. In terms of assembly, part of the 50S ribosomal subunit. Contacts protein L20.

This protein binds to 23S rRNA in the presence of protein L20. The sequence is that of Large ribosomal subunit protein bL21 (rplU) from Streptococcus thermophilus.